The chain runs to 127 residues: Cyclin-dependent kinase 2-associated protein 2 (127 aa).

The segment at 1–49 (MSYKPIAPAPSSTPGSSTPGPGTPVPTAGSVPSPSGSVPGAAGPFRPLF) is disordered. Low complexity predominate over residues 9 to 44 (APSSTPGSSTPGPGTPVPTAGSVPSPSGSVPGAAGP). An interaction with CDK2 region spans residues 65–107 (PPGAQGSQSTYTDLLSVIEEMGKEIRPTYAGSKSAMERLKRGI).

Belongs to the CDK2AP family. Component of the nucleosome remodeling and deacetylase (NuRD) repressor complex, composed of core proteins MTA1, MTA2, MTA3, RBBP4, RBBP7, HDAC1, HDAC2, MBD2, MBD3, and peripherally associated proteins CDK2AP1, CDK2AP2, GATAD2A, GATAD2B, CHD3, CHD4 and CHD5. The exact stoichiometry of the NuRD complex is unknown, and some subunits such as MBD2 and MBD3, GATAD2A and GATAD2B, and CHD3, CHD4 and CHD5 define mutually exclusive NuRD complexes. Interacts with CDK2AP1. Interacts with CDK2. Interacts with MAPK1. Post-translationally, phosphorylated by MAPK1 and CDK2.

The protein localises to the cytoplasm. The protein resides in the nucleus. Acts as a component of the histone deacetylase NuRD complex which participates in the remodeling of chromatin. Inhibits cell cycle G1/S phase transition by repressing CDK2 expression and activation; represses CDK2 activation by inhibiting its interaction with cyclin E and A. Plays a role in regulating the self-renewal of embryonic stem cells (ESCs) and in maintaining cell survival during terminal differentiation of ESCs. Regulates microtubule organization of metaphase II oocytes. This chain is Cyclin-dependent kinase 2-associated protein 2 (CDK2AP2), found in Bos taurus (Bovine).